A 236-amino-acid polypeptide reads, in one-letter code: uncharacterized protein (236 aa).

The tract at residues 186–236 (HGRGDTRNLNDITGLGHERERDRENTHYEKKPKLDSDSEVDIRSFRQDMDL) is disordered. Positions 201–236 (GHERERDRENTHYEKKPKLDSDSEVDIRSFRQDMDL) are enriched in basic and acidic residues. Ser221 carries the phosphoserine modification.

This is an uncharacterized protein from Saccharomyces cerevisiae (strain ATCC 204508 / S288c) (Baker's yeast).